Here is a 198-residue protein sequence, read N- to C-terminus: tRNA (pseudouridine(54)-N(1))-methyltransferase (198 aa).

S-adenosyl-L-methionine contacts are provided by residues L130, G153, 176-181 (LSPLEL), and C186.

This sequence belongs to the methyltransferase superfamily. TrmY family. In terms of assembly, homodimer.

The protein localises to the cytoplasm. It carries out the reaction pseudouridine(54) in tRNA + S-adenosyl-L-methionine = N(1)-methylpseudouridine(54) in tRNA + S-adenosyl-L-homocysteine + H(+). Functionally, specifically catalyzes the N1-methylation of pseudouridine at position 54 (Psi54) in tRNAs. The polypeptide is tRNA (pseudouridine(54)-N(1))-methyltransferase (Methanococcus maripaludis (strain C5 / ATCC BAA-1333)).